We begin with the raw amino-acid sequence, 164 residues long: MLVTVGSMNERVPDSSGLPLRAMVMVLLFLGVVFLLLVWQALGSSPNSEDDSSAISTMTTTTAAPTSTSVKPAAPRAEVRVYNISGTEGAAARTADRLKAAGFTVTDVGNLSLPDVAATTVYYTEVEGERATADAVGRTLGAAVELRLPELSDQPPGVIVVVTG.

In terms of processing, could be O-mannosylated. Is likely mannosylated on Thr-61 when overexpressed in M.smegmatis.

The protein resides in the cell inner membrane. The protein localises to the cytoplasm. Its function is as follows. Virulence factor that regulates vesiculogenesis. Acts by regulating the production of mycobacterial membrane vesicles (MV) bearing Toll-like receptor 2 (TLR2) ligands, including the lipoproteins LpqH, a major host TLR2 agonist, and SodC. By restraining the release of most of the material that activates host cells through TLR2, VirR reduces the immunostimulant potential of M.tuberculosis and increases its virulence. May contribute to cell envelope integrity. When overexpressed in M.smegmatis, it modulates the production of IL-10, IL-12 p40 and TNF-alpha by RAW264.7 macrophages and it decreases the killing of M.smegmatis. This is Vesiculogenesis and immune response regulator from Mycobacterium tuberculosis (strain ATCC 25618 / H37Rv).